The chain runs to 545 residues: Glucose-6-phosphate isomerase (545 aa).

The Proton donor role is filled by glutamate 345. Active-site residues include histidine 376 and lysine 514.

This sequence belongs to the GPI family.

The protein localises to the cytoplasm. The enzyme catalyses alpha-D-glucose 6-phosphate = beta-D-fructose 6-phosphate. It functions in the pathway carbohydrate biosynthesis; gluconeogenesis. Its pathway is carbohydrate degradation; glycolysis; D-glyceraldehyde 3-phosphate and glycerone phosphate from D-glucose: step 2/4. Catalyzes the reversible isomerization of glucose-6-phosphate to fructose-6-phosphate. This is Glucose-6-phosphate isomerase from Leptothrix cholodnii (strain ATCC 51168 / LMG 8142 / SP-6) (Leptothrix discophora (strain SP-6)).